The following is a 566-amino-acid chain: Protein pacG (566 aa).

A DNA-binding region (NDT80) is located at residues 79–326; the sequence is TSFDPPPPAE…RSPRNFQSRK (248 aa). Disordered stretches follow at residues 314–422 and 448–470; these read VRGR…EAHR and DSRPHTSFSNDLASKSLSVDSGR. Low complexity predominate over residues 333–349; that stretch reads SAAASRKNAQAAAASNN. Composition is skewed to polar residues over residues 365 to 391, 403 to 413, and 452 to 466; these read VKSSSPETSSNGVPQQSPPNWALATNS, HSSVYSQSSPE, and HTSFSNDLASKSLSV.

It localises to the nucleus. Its subcellular location is the cytoplasm. Its function is as follows. Transcription factor that acts as a positive regulator of nonrepressible acid phosphatase activity. Is a major regulator of responses to nitrogen and carbon starvation and is essential for the expression of genes involved in vegetative incompatibility (like pin-c, het-6, and tol). Vegetative incompatibility is a non-self-recognition system ubiquitous in filamentous fungi which results in programmed cell death. In Emericella nidulans (strain FGSC A4 / ATCC 38163 / CBS 112.46 / NRRL 194 / M139) (Aspergillus nidulans), this protein is Protein pacG (pacG).